We begin with the raw amino-acid sequence, 396 residues long: S-adenosylmethionine synthase (396 aa).

Histidine 14 provides a ligand contact to ATP. Residue aspartate 16 participates in Mg(2+) binding. Glutamate 42 is a K(+) binding site. L-methionine contacts are provided by glutamate 55 and glutamine 98. Residues 98-108 (QSPDIAMGVDK) are flexible loop. ATP is bound by residues 174–176 (DGK), 240–241 (RF), aspartate 249, 255–256 (RK), alanine 272, and lysine 276. Aspartate 249 lines the L-methionine pocket. Lysine 280 provides a ligand contact to L-methionine.

The protein belongs to the AdoMet synthase family. Homotetramer; dimer of dimers. The cofactor is Mg(2+). It depends on K(+) as a cofactor.

It is found in the cytoplasm. It carries out the reaction L-methionine + ATP + H2O = S-adenosyl-L-methionine + phosphate + diphosphate. The protein operates within amino-acid biosynthesis; S-adenosyl-L-methionine biosynthesis; S-adenosyl-L-methionine from L-methionine: step 1/1. Its function is as follows. Catalyzes the formation of S-adenosylmethionine (AdoMet) from methionine and ATP. The overall synthetic reaction is composed of two sequential steps, AdoMet formation and the subsequent tripolyphosphate hydrolysis which occurs prior to release of AdoMet from the enzyme. In Caldicellulosiruptor saccharolyticus (strain ATCC 43494 / DSM 8903 / Tp8T 6331), this protein is S-adenosylmethionine synthase.